The sequence spans 295 residues: Pyridoxal 5'-phosphate synthase subunit PdxS (295 aa).

Residue Asp25 participates in D-ribose 5-phosphate binding. Lys82 functions as the Schiff-base intermediate with D-ribose 5-phosphate in the catalytic mechanism. D-ribose 5-phosphate is bound at residue Gly154. Arg166 serves as a coordination point for D-glyceraldehyde 3-phosphate. Residues Gly215 and Gly236–Ser237 each bind D-ribose 5-phosphate.

The protein belongs to the PdxS/SNZ family. In the presence of PdxT, forms a dodecamer of heterodimers.

The catalysed reaction is aldehydo-D-ribose 5-phosphate + D-glyceraldehyde 3-phosphate + L-glutamine = pyridoxal 5'-phosphate + L-glutamate + phosphate + 3 H2O + H(+). It participates in cofactor biosynthesis; pyridoxal 5'-phosphate biosynthesis. Functionally, catalyzes the formation of pyridoxal 5'-phosphate from ribose 5-phosphate (RBP), glyceraldehyde 3-phosphate (G3P) and ammonia. The ammonia is provided by the PdxT subunit. Can also use ribulose 5-phosphate and dihydroxyacetone phosphate as substrates, resulting from enzyme-catalyzed isomerization of RBP and G3P, respectively. The sequence is that of Pyridoxal 5'-phosphate synthase subunit PdxS from Bacillus anthracis (strain A0248).